Consider the following 301-residue polypeptide: Probable alpha-L-glutamate ligase (301 aa).

Residues 104 to 287 (LQLLSRRGIG…VAGMIIEHLE (184 aa)) form the ATP-grasp domain. ATP is bound by residues Lys141, 178–179 (EY), Asp187, and 211–213 (RSN). Residues Asp248, Glu260, and Asn262 each contribute to the Mg(2+) site. Asp248, Glu260, and Asn262 together coordinate Mn(2+).

It belongs to the RimK family. It depends on Mg(2+) as a cofactor. Requires Mn(2+) as cofactor.

This Pseudomonas entomophila (strain L48) protein is Probable alpha-L-glutamate ligase.